We begin with the raw amino-acid sequence, 558 residues long: N-acetylglucosamine-6-O-sulfatase (558 aa).

Residue S101 is modified to 3-oxoalanine (Ser).

The protein belongs to the sulfatase family. The conversion to 3-oxoalanine (also known as C-formylglycine, FGly), of a serine or cysteine residue in prokaryotes and of a cysteine residue in eukaryotes, is critical for catalytic activity.

Functionally, exosulfatase involved in the degradation of the glycosaminoglycan (GAG) heparan sulfate (HS). Catalyzes the hydrolysis of the 6-sulfate groups of the N-acetyl-D-glucosamine 6-sulfate units. GAG-specific sulfatases play a key role in the persistence of the major human gut symbiont B.thetaiotaomicron in the host gastrointestinal tract. The polypeptide is N-acetylglucosamine-6-O-sulfatase (Bacteroides thetaiotaomicron (strain ATCC 29148 / DSM 2079 / JCM 5827 / CCUG 10774 / NCTC 10582 / VPI-5482 / E50)).